The sequence spans 293 residues: Ribulose bisphosphate carboxylase/oxygenase activase, chloroplastic (293 aa).

Residue 75 to 82 (PGTGKTTV) participates in ATP binding.

This sequence belongs to the CbxX/CfxQ family. Forms homooligomers. Forms heterohexameric rings with the nuclear-encoded Rca subunit consisting of 3 of each nuclear- and plastidial-encoded subunits that alternate in the ring.

It is found in the plastid. The protein resides in the chloroplast. In terms of biological role, required for the expression of ribulose 1,5-bisphosphate carboxylase/oxygenase (RuBisCo). ATPase involved in the activation of red-type RuBisCo, which tends to form inactive complexes with its substrate ribulose 1,5-bisphosphate (RuBP). Catalyzes the release of RuBP from inhibited RuBisCo in an ATP-dependent manner. Activation of RuBisCO involves the ATP-dependent carboxylation of the epsilon-amino group of lysine leading to a carbamate structure. The nuclear-encoded subunit plays a more critical role in activase function than the plastidial-encoded subunit. This is Ribulose bisphosphate carboxylase/oxygenase activase, chloroplastic from Cyanidioschyzon merolae (strain NIES-3377 / 10D) (Unicellular red alga).